We begin with the raw amino-acid sequence, 927 residues long: DNA mismatch repair protein MutS (927 aa).

Positions 44-80 (DESLKRPRNRHKPTSVPSIPLDSESQEQLETADNDND) are disordered. Over residues 67 to 79 (ESQEQLETADNDN) the composition is skewed to acidic residues. 725–732 (GPNASGKS) lines the ATP pocket.

It belongs to the DNA mismatch repair MutS family.

In terms of biological role, this protein is involved in the repair of mismatches in DNA. It is possible that it carries out the mismatch recognition step. This protein has a weak ATPase activity. The chain is DNA mismatch repair protein MutS from Prochlorococcus marinus (strain MIT 9303).